The primary structure comprises 848 residues: MCPEQPHDTRAERDEMSEQTQQAAQPAETAAYDVRAIQDKWLPVWERLDPFRADDSSPREKKYALTMFPYPSGDLHMGHAEVTALHDVVARYWWQRGYEVLNPMGWDSFGLPAENAAIRNDEHPATYTYANIETQYESFKRYAVSFDWSRRLHTSDPEYYRWTQWLFLKFRERGLAYRKSSPVNWCPNDQTVLANEQVVDGRCERCGAEVTKRELTQWYFKITDYAQELLDRLDDLEPTWPARVVTAQRNWIGRSEGAHVDFVVDGRDEPITVYTTRPDTIFGTTFMVVAVDSPLAAELVTDAQRPAFEAYREEIRKETEIERLSTDRPKTGVDLGVTATNPVTGTQIPVWATDYVLADYGTGAVMGVPGGDQRDWEFATEMGLDIVRTTQTPEGFDGEAYHGEGPAINSPAPGADAPLDINGLPVDEAKRATIEFLEQQGTGAGAVNFRLRDWLLSRQRYWGVPIPIIHCDACGEVAVPYDQLPLELPELRGADLKPKGVSPLAAAEEWVNVACPECGGAATRDSDTMDTFVDSSWYFLRYCSPDYTEGPFDVEKAKAWMPADIYVGGVEHAVLHLLYARFFTKVLRDMGMLEVDEPFAAQLNQGIVINQGKKMSKSLGNGVSLGDQLAEFGVDAVRVTLVFAGPPEDDIDWADVSPAGALRFLQRAWRLSGDVTSEAGTPAAGGDVALRRVTARTVHDAAELIESYRFNVMVARVMELVNATRKAIDGAPGPADPAVREATETVAILLSLVAPYVAEEMWERLGHEPTVARVGWPEVDPALLVEEQVTAVVQIQGKVRARLEVAPDISEADLEQLAMADPAVVRAIDGRPVRKVIVRAPKLVNVVV.

A compositionally biased stretch (basic and acidic residues) spans 1 to 16 (MCPEQPHDTRAERDEM). The disordered stretch occupies residues 1-30 (MCPEQPHDTRAERDEMSEQTQQAAQPAETA). A compositionally biased stretch (low complexity) spans 18–30 (EQTQQAAQPAETA). The 'HIGH' region motif lies at 69–79 (PYPSGDLHMGH). Positions 614-618 (KMSKS) match the 'KMSKS' region motif. Lys617 lines the ATP pocket.

This sequence belongs to the class-I aminoacyl-tRNA synthetase family.

The protein resides in the cytoplasm. It catalyses the reaction tRNA(Leu) + L-leucine + ATP = L-leucyl-tRNA(Leu) + AMP + diphosphate. The sequence is that of Leucine--tRNA ligase from Nocardioides sp. (strain ATCC BAA-499 / JS614).